We begin with the raw amino-acid sequence, 142 residues long: Large ribosomal subunit protein uL13 (142 aa).

The protein belongs to the universal ribosomal protein uL13 family. Part of the 50S ribosomal subunit.

Its function is as follows. This protein is one of the early assembly proteins of the 50S ribosomal subunit, although it is not seen to bind rRNA by itself. It is important during the early stages of 50S assembly. The chain is Large ribosomal subunit protein uL13 from Shewanella putrefaciens (strain CN-32 / ATCC BAA-453).